The following is a 322-amino-acid chain: NADH-quinone oxidoreductase subunit H (322 aa).

The next 8 membrane-spanning stretches (helical) occupy residues 15–35 (IFQS…MSVV), 81–101 (ITFL…ITII), 114–134 (IGVL…LLAG), 149–169 (ATAQ…GVVA), 184–204 (IGLW…IAGL), 237–257 (FFIG…TMFF), 265–285 (FPSY…FILI), and 299–319 (LFGW…TALI).

Belongs to the complex I subunit 1 family. NDH-1 is composed of 13 different subunits. Subunits NuoA, H, J, K, L, M, N constitute the membrane sector of the complex.

The protein resides in the cell membrane. It carries out the reaction a quinone + NADH + 5 H(+)(in) = a quinol + NAD(+) + 4 H(+)(out). Functionally, NDH-1 shuttles electrons from NADH, via FMN and iron-sulfur (Fe-S) centers, to quinones in the respiratory chain. The immediate electron acceptor for the enzyme in this species is believed to be ubiquinone. Couples the redox reaction to proton translocation (for every two electrons transferred, four hydrogen ions are translocated across the cytoplasmic membrane), and thus conserves the redox energy in a proton gradient. This subunit may bind ubiquinone. The polypeptide is NADH-quinone oxidoreductase subunit H (Buchnera aphidicola subsp. Baizongia pistaciae (strain Bp)).